A 114-amino-acid polypeptide reads, in one-letter code: Superoxide dismutase [Cu-Zn] (114 aa).

Positions 37, 39, and 54 each coordinate Cu cation. The disordered stretch occupies residues 48-76 (CMSSGPHFNPRSKEHGAPTDENRHLGDLG). Zn(2+) is bound by residues H54, H62, H71, and D74. Positions 58 to 73 (RSKEHGAPTDENRHLG) are enriched in basic and acidic residues. Cu cation is bound at residue H111.

This sequence belongs to the Cu-Zn superoxide dismutase family. Homodimer. Cu cation is required as a cofactor. Requires Zn(2+) as cofactor.

The protein localises to the cytoplasm. It carries out the reaction 2 superoxide + 2 H(+) = H2O2 + O2. Its function is as follows. Destroys radicals which are normally produced within the cells and which are toxic to biological systems. The chain is Superoxide dismutase [Cu-Zn] from Drosophila obscura (Fruit fly).